A 460-amino-acid polypeptide reads, in one-letter code: MKLTDSQKHLYSQYLAVTLIAVQFSFDTCVYLSSVVQYVKECGSDDPENYLFILQAVSAAVQVFFSFIIGDIASYVGSIKWVIIFLYFLSFVGNFLYSCAGAVSLNTLLGGRIICGAASSSGAVVYSYITAISKDRTTIFKLFSIYRTSAGICMALAQLVAILFALCDFTVRGYRITSYNAPTFASSFIILLICVLLMFVLENPPVKSARNPKNYLDAWKKFFSAGSNRLIASLILLWNMFLSTFFMCEVLYFMPIFLTLNVGWKTEYEGVAFMVSAVLGVAGSFFAPDLVKLFAKLNTPSTQDETDTSDNDKIEKEESEQKSDINTLHRNQVSLTIFALFVALIGQAFMIGASEALSNDKLPKTNSGIFFTAGLSITMLGYNFMGSSVPALFSMYIDPQVKVQLMPFIGAIAGVGKLVAPIVLAALYKTPLGLPIGVGFGMILVGISIPSLVYLRRNKM.

A run of 8 helical transmembrane segments spans residues 16-36 (AVTL…SSVV), 50-70 (YLFI…FIIG), 81-101 (WVII…SCAG), 113-133 (IICG…TAIS), 151-171 (GICM…DFTV), 181-201 (APTF…MFVL), 240-260 (MFLS…FLTL), and 271-291 (VAFM…PDLV). The tract at residues 300 to 323 (PSTQDETDTSDNDKIEKEESEQKS) is disordered. Over residues 310–323 (DNDKIEKEESEQKS) the composition is skewed to basic and acidic residues. Helical transmembrane passes span 333-353 (VSLT…MIGA), 369-389 (IFFT…GSSV), 408-428 (FIGA…AALY), and 433-453 (GLPI…PSLV).

Belongs to the major facilitator superfamily. TCR/Tet family.

It is found in the cell membrane. MFS-type transporer required for the uptake of iron via the uptake of the siderophore pulcherrimin-iron complex. The chain is MFS-type transporter PUL3 from Kluyveromyces lactis (strain ATCC 8585 / CBS 2359 / DSM 70799 / NBRC 1267 / NRRL Y-1140 / WM37) (Yeast).